An 86-amino-acid polypeptide reads, in one-letter code: Photosystem I reaction center subunit PsaK 1 (86 aa).

Residues 1–8 (MLTSTLLA) constitute a propeptide that is removed on maturation. The next 2 membrane-spanning stretches (helical) occupy residues 14–34 (LEWS…AITF) and 60–80 (PALL…VLGL).

This sequence belongs to the PsaG/PsaK family. As to quaternary structure, the cyanobacterial PSI reaction center is composed of one copy each of PsaA,B,C,D,E,F,I,J,K,L,M and X, and forms dimeric and tetrameric complexes.

It is found in the cellular thylakoid membrane. This chain is Photosystem I reaction center subunit PsaK 1 (psaK1), found in Nostoc sp. (strain PCC 7120 / SAG 25.82 / UTEX 2576).